Reading from the N-terminus, the 886-residue chain is Vam6/Vps39-like protein (886 aa).

Positions proline 15–isoleucine 294 constitute a CNH domain. One copy of the CHCR repeat lies at phenylalanine 573–serine 750.

Belongs to the VAM6/VPS39 family. As to quaternary structure, homooligomer. Interacts with TGFBR2 and, less efficiently, with TGFBR1; interaction with TGFBR2 is independent of the receptor kinase activity and of the presence of TGF-beta. Also interacts with ACVR2B, but not with BMPR2. Interacts with SMAD4, preferentially following TGF-beta treatment. Does not interact with SAMD2 or SMAD3. Component of the homotypic fusion and vacuole protein sorting (HOPS) complex; the core of which composed of the class C Vps proteins VPS11, VPS16, VPS18 and VPS33A, is associated with VPS39 and VPS41. Interacts with PLEKHM2; involved in VPS39 recruitment to ARL8B-containing lysosomes. Associates with adapter protein complex 3 (AP-3) and clathrin:AP-3 complexes. Interacts with STX17; this interaction is increased in the absence of TMEM39A. Interacts with RAB7, RAB2A and RAB2B. Interacts with RAB2A (GTP-bound); the interaction contributes to obtaining a functional HOPS complex that promotes autophagosome-lysosome membrane fusion driven by STX17-SNAP29-VAMP8. Interacts with RAB39A (GTP-bound) and RAB39B (GTP-bound); interaction with RAB39A contributes to obtaining a functional HOPS complex. (Microbial infection) Interacts with SARS coronavirus-2/SARS-CoV-2 ORF3A protein; the interaction is direct and sequestrates VPS39, thereby preventing HOPS complex from interacting with the autophagosomal SNARE protein STX17. ORF3A enhances the interaction of VPS39 with VPS11 and VPS18, while its interaction with the VPS16:VPS33A module is attenuated. As to expression, widely expressed, with highest levels in heart, skeletal muscle, kidney, pancreas, brain, placenta and spleen.

The protein localises to the cytoplasm. Its subcellular location is the lysosome membrane. It localises to the late endosome membrane. Regulator of TGF-beta/activin signaling, inhibiting SMAD3- and activating SMAD2-dependent transcription. Acts by interfering with SMAD3/SMAD4 complex formation, this would lead to inhibition of SMAD3-dependent transcription and relieve SMAD3 inhibition of SMAD2-dependent promoters, thus increasing SMAD2-dependent transcription. Does not affect TGF-beta-induced SMAD2 or SMAD3 phosphorylation, nor SMAD2/SMAD4 complex formation. In terms of biological role, plays a role in vesicle-mediated protein trafficking to lysosomal compartments including the endocytic membrane transport and autophagic pathways. Acts as a component of the HOPS endosomal tethering complex. This complex is proposed to be involved in the Rab5-to-Rab7 endosome conversion probably implicating MON1A/B, and via binding SNAREs and SNARE complexes to mediate tethering and docking events during SNARE-mediated membrane fusion. The HOPS complex is proposed to be recruited to Rab7 on the late endosomal membrane and to regulate late endocytic, phagocytic and autophagic traffic towards lysosomes. Involved in homotypic vesicle fusions between late endosomes and in heterotypic fusions between late endosomes and lysosomes. Required for fusion of endosomes and autophagosomes with lysosomes. The protein is Vam6/Vps39-like protein of Homo sapiens (Human).